Reading from the N-terminus, the 87-residue chain is Cell division topological specificity factor (87 aa).

It belongs to the MinE family.

Its function is as follows. Prevents the cell division inhibition by proteins MinC and MinD at internal division sites while permitting inhibition at polar sites. This ensures cell division at the proper site by restricting the formation of a division septum at the midpoint of the long axis of the cell. This chain is Cell division topological specificity factor, found in Delftia acidovorans (strain DSM 14801 / SPH-1).